A 288-amino-acid chain; its full sequence is 4-hydroxy-3-methylbut-2-enyl diphosphate reductase (288 aa).

C12 provides a ligand contact to [4Fe-4S] cluster. Positions 42 and 77 each coordinate (2E)-4-hydroxy-3-methylbut-2-enyl diphosphate. Positions 42 and 77 each coordinate dimethylallyl diphosphate. H42 and H77 together coordinate isopentenyl diphosphate. C99 is a [4Fe-4S] cluster binding site. Residue H127 coordinates (2E)-4-hydroxy-3-methylbut-2-enyl diphosphate. A dimethylallyl diphosphate-binding site is contributed by H127. Residue H127 participates in isopentenyl diphosphate binding. E129 serves as the catalytic Proton donor. Residue T165 participates in (2E)-4-hydroxy-3-methylbut-2-enyl diphosphate binding. C193 provides a ligand contact to [4Fe-4S] cluster. Positions 221, 222, 223, and 265 each coordinate (2E)-4-hydroxy-3-methylbut-2-enyl diphosphate. The dimethylallyl diphosphate site is built by S221, S222, N223, and S265. Isopentenyl diphosphate contacts are provided by S221, S222, N223, and S265.

This sequence belongs to the IspH family. Requires [4Fe-4S] cluster as cofactor.

The catalysed reaction is isopentenyl diphosphate + 2 oxidized [2Fe-2S]-[ferredoxin] + H2O = (2E)-4-hydroxy-3-methylbut-2-enyl diphosphate + 2 reduced [2Fe-2S]-[ferredoxin] + 2 H(+). It catalyses the reaction dimethylallyl diphosphate + 2 oxidized [2Fe-2S]-[ferredoxin] + H2O = (2E)-4-hydroxy-3-methylbut-2-enyl diphosphate + 2 reduced [2Fe-2S]-[ferredoxin] + 2 H(+). The protein operates within isoprenoid biosynthesis; dimethylallyl diphosphate biosynthesis; dimethylallyl diphosphate from (2E)-4-hydroxy-3-methylbutenyl diphosphate: step 1/1. Its pathway is isoprenoid biosynthesis; isopentenyl diphosphate biosynthesis via DXP pathway; isopentenyl diphosphate from 1-deoxy-D-xylulose 5-phosphate: step 6/6. Catalyzes the conversion of 1-hydroxy-2-methyl-2-(E)-butenyl 4-diphosphate (HMBPP) into a mixture of isopentenyl diphosphate (IPP) and dimethylallyl diphosphate (DMAPP). Acts in the terminal step of the DOXP/MEP pathway for isoprenoid precursor biosynthesis. The sequence is that of 4-hydroxy-3-methylbut-2-enyl diphosphate reductase from Caldanaerobacter subterraneus subsp. tengcongensis (strain DSM 15242 / JCM 11007 / NBRC 100824 / MB4) (Thermoanaerobacter tengcongensis).